Here is a 917-residue protein sequence, read N- to C-terminus: Bifunctional aspartokinase/homoserine dehydrogenase 2, chloroplastic (917 aa).

Residues 1–89 constitute a chloroplast transit peptide; that stretch reads MQGLAVSCQL…EVNTYLPKGD (89 aa). The interval 90 to 338 is aspartokinase; the sequence is MWSVHKFGGT…VSEAVILSTL (249 aa). An interface region spans residues 339–563; that stretch reads SYQEAWEMSY…LSKTTLAVGI (225 aa). 2 ACT domains span residues 413 to 488 and 494 to 571; these read VEGT…VING and AVGL…LIGG. A homoserine dehydrogenase region spans residues 564 to 917; sequence IGPGLIGGAL…RLASYLGAPS (354 aa). Residues Ile-569 and Thr-650 each contribute to the NAD(+) site. NADP(+) contacts are provided by Ile-569, Thr-650, and Lys-674. Positions 569, 650, and 674 each coordinate NADPH. Na(+) is bound by residues Glu-701, Val-704, Ala-706, and Leu-708. NADP(+)-binding residues include Gly-759 and Glu-762. Positions 762 and 773 each coordinate L-homoserine. Catalysis depends on Lys-777, which acts as the Proton donor. Gly-894 serves as a coordination point for NAD(+). An NADP(+)-binding site is contributed by Gly-894. Gly-894 is a binding site for NADPH.

This sequence in the N-terminal section; belongs to the aspartokinase family. It in the C-terminal section; belongs to the homoserine dehydrogenase family. As to quaternary structure, homo- or heterodimer. A metal cation serves as cofactor.

The protein localises to the plastid. Its subcellular location is the chloroplast. It carries out the reaction L-homoserine + NADP(+) = L-aspartate 4-semialdehyde + NADPH + H(+). The catalysed reaction is L-homoserine + NAD(+) = L-aspartate 4-semialdehyde + NADH + H(+). It catalyses the reaction L-aspartate + ATP = 4-phospho-L-aspartate + ADP. It participates in amino-acid biosynthesis; L-lysine biosynthesis via DAP pathway; (S)-tetrahydrodipicolinate from L-aspartate: step 1/4. Its pathway is amino-acid biosynthesis; L-methionine biosynthesis via de novo pathway; L-homoserine from L-aspartate: step 1/3. The protein operates within amino-acid biosynthesis; L-methionine biosynthesis via de novo pathway; L-homoserine from L-aspartate: step 3/3. It functions in the pathway amino-acid biosynthesis; L-threonine biosynthesis; L-threonine from L-aspartate: step 1/5. It participates in amino-acid biosynthesis; L-threonine biosynthesis; L-threonine from L-aspartate: step 3/5. Functionally, bifunctional aspartate kinase and homoserine dehydrogenase that catalyzes the first and the third steps toward the synthesis of lysine, methionine and threonine from aspartate. This chain is Bifunctional aspartokinase/homoserine dehydrogenase 2, chloroplastic (AKHSDH2), found in Zea mays (Maize).